Consider the following 121-residue polypeptide: Large ribosomal subunit protein bL21 (121 aa).

Belongs to the bacterial ribosomal protein bL21 family. In terms of assembly, part of the 50S ribosomal subunit. Contacts protein L20.

This protein binds to 23S rRNA in the presence of protein L20. This Synechococcus sp. (strain CC9605) protein is Large ribosomal subunit protein bL21.